We begin with the raw amino-acid sequence, 401 residues long: Acetate kinase (401 aa).

A Mg(2+)-binding site is contributed by Asn-9. Lys-16 is an ATP binding site. Position 88 (Arg-88) interacts with substrate. The active-site Proton donor/acceptor is the Asp-147. ATP contacts are provided by residues 207–211 (HLGNG), 282–284 (DCR), and 333–337 (GIGEN). Residue Glu-388 coordinates Mg(2+).

It belongs to the acetokinase family. In terms of assembly, homodimer. The cofactor is Mg(2+). It depends on Mn(2+) as a cofactor.

It localises to the cytoplasm. It carries out the reaction acetate + ATP = acetyl phosphate + ADP. It participates in metabolic intermediate biosynthesis; acetyl-CoA biosynthesis; acetyl-CoA from acetate: step 1/2. Catalyzes the formation of acetyl phosphate from acetate and ATP. Can also catalyze the reverse reaction. This Haemophilus influenzae (strain ATCC 51907 / DSM 11121 / KW20 / Rd) protein is Acetate kinase.